The sequence spans 113 residues: Large ribosomal subunit protein bL20c (113 aa).

It belongs to the bacterial ribosomal protein bL20 family.

It localises to the plastid. The protein resides in the chloroplast. Functionally, binds directly to 23S ribosomal RNA and is necessary for the in vitro assembly process of the 50S ribosomal subunit. It is not involved in the protein synthesizing functions of that subunit. The polypeptide is Large ribosomal subunit protein bL20c (Nephroselmis olivacea (Green alga)).